The primary structure comprises 499 residues: UDP-N-acetylmuramoylalanine--D-glutamate ligase (499 aa).

120–126 (GTNGKTT) is a binding site for ATP.

This sequence belongs to the MurCDEF family.

It localises to the cytoplasm. The catalysed reaction is UDP-N-acetyl-alpha-D-muramoyl-L-alanine + D-glutamate + ATP = UDP-N-acetyl-alpha-D-muramoyl-L-alanyl-D-glutamate + ADP + phosphate + H(+). The protein operates within cell wall biogenesis; peptidoglycan biosynthesis. Its function is as follows. Cell wall formation. Catalyzes the addition of glutamate to the nucleotide precursor UDP-N-acetylmuramoyl-L-alanine (UMA). The protein is UDP-N-acetylmuramoylalanine--D-glutamate ligase of Nostoc punctiforme (strain ATCC 29133 / PCC 73102).